A 252-amino-acid polypeptide reads, in one-letter code: Two-component response regulator ORR2 (252 aa).

In terms of domain architecture, Response regulatory spans 7 to 157; it reads RVLVVDDSPV…DVQRLRKCSG (151 aa). 4-aspartylphosphate is present on Asp-90.

This sequence belongs to the ARR family. Type-A subfamily. In terms of processing, two-component system major event consists of a His-to-Asp phosphorelay between a sensor histidine kinase (HK) and a response regulator (RR). In plants, the His-to-Asp phosphorelay involves an additional intermediate named Histidine-containing phosphotransfer protein (HPt). This multistep phosphorelay consists of a His-Asp-His-Asp sequential transfer of a phosphate group between first a His and an Asp of the HK protein, followed by the transfer to a conserved His of the HPt protein and finally the transfer to an Asp in the receiver domain of the RR protein. Expressed in mature leaves and flowers, and at low levels in roots and shoots.

Its function is as follows. Functions as a response regulator involved in His-to-Asp phosphorelay signal transduction system. Phosphorylation of the Asp residue in the receiver domain activates the ability of the protein to promote the transcription of target genes. Type-A response regulators seem to act as negative regulators of the cytokinin signaling. This chain is Two-component response regulator ORR2, found in Oryza sativa subsp. indica (Rice).